The chain runs to 67 residues: Nigrocin-2GRc (67 aa).

Residues 1-22 form the signal peptide; it reads MFTMKKSMLLLFFLGTISLSLC. Positions 23 to 46 are excised as a propeptide; sequence EQERNADEEERRDEEVAKMEEIKR. The cysteines at positions 61 and 67 are disulfide-linked.

Expressed by the skin glands.

It is found in the secreted. Functionally, antimicrobial peptide active at least against the Gram-positive bacterium S.aureus but with otherwise unclear activity spectrum. Lacks hemolytic activity against rabbit or human erythrocytes. The chain is Nigrocin-2GRc from Odorrana grahami (Yunnanfu frog).